A 164-amino-acid chain; its full sequence is 6,7-dimethyl-8-ribityllumazine synthase (164 aa).

5-amino-6-(D-ribitylamino)uracil-binding positions include phenylalanine 24, 62–64 (SFE), and 86–88 (AVI). 91 to 92 (QT) lines the (2S)-2-hydroxy-3-oxobutyl phosphate pocket. Catalysis depends on histidine 94, which acts as the Proton donor. Residue phenylalanine 119 coordinates 5-amino-6-(D-ribitylamino)uracil. Arginine 133 is a binding site for (2S)-2-hydroxy-3-oxobutyl phosphate.

This sequence belongs to the DMRL synthase family.

The enzyme catalyses (2S)-2-hydroxy-3-oxobutyl phosphate + 5-amino-6-(D-ribitylamino)uracil = 6,7-dimethyl-8-(1-D-ribityl)lumazine + phosphate + 2 H2O + H(+). It functions in the pathway cofactor biosynthesis; riboflavin biosynthesis; riboflavin from 2-hydroxy-3-oxobutyl phosphate and 5-amino-6-(D-ribitylamino)uracil: step 1/2. Functionally, catalyzes the formation of 6,7-dimethyl-8-ribityllumazine by condensation of 5-amino-6-(D-ribitylamino)uracil with 3,4-dihydroxy-2-butanone 4-phosphate. This is the penultimate step in the biosynthesis of riboflavin. This Synechocystis sp. (strain ATCC 27184 / PCC 6803 / Kazusa) protein is 6,7-dimethyl-8-ribityllumazine synthase.